The primary structure comprises 555 residues: Dihydroxy-acid dehydratase (555 aa).

D78 provides a ligand contact to Mg(2+). [2Fe-2S] cluster is bound at residue C119. Mg(2+) contacts are provided by D120 and K121. An N6-carboxylysine modification is found at K121. [2Fe-2S] cluster is bound at residue C191. E444 serves as a coordination point for Mg(2+). S470 acts as the Proton acceptor in catalysis.

This sequence belongs to the IlvD/Edd family. As to quaternary structure, homodimer. [2Fe-2S] cluster serves as cofactor. The cofactor is Mg(2+).

It carries out the reaction (2R)-2,3-dihydroxy-3-methylbutanoate = 3-methyl-2-oxobutanoate + H2O. The enzyme catalyses (2R,3R)-2,3-dihydroxy-3-methylpentanoate = (S)-3-methyl-2-oxopentanoate + H2O. It functions in the pathway amino-acid biosynthesis; L-isoleucine biosynthesis; L-isoleucine from 2-oxobutanoate: step 3/4. Its pathway is amino-acid biosynthesis; L-valine biosynthesis; L-valine from pyruvate: step 3/4. Its function is as follows. Functions in the biosynthesis of branched-chain amino acids. Catalyzes the dehydration of (2R,3R)-2,3-dihydroxy-3-methylpentanoate (2,3-dihydroxy-3-methylvalerate) into 2-oxo-3-methylpentanoate (2-oxo-3-methylvalerate) and of (2R)-2,3-dihydroxy-3-methylbutanoate (2,3-dihydroxyisovalerate) into 2-oxo-3-methylbutanoate (2-oxoisovalerate), the penultimate precursor to L-isoleucine and L-valine, respectively. This is Dihydroxy-acid dehydratase from Oleidesulfovibrio alaskensis (strain ATCC BAA-1058 / DSM 17464 / G20) (Desulfovibrio alaskensis).